We begin with the raw amino-acid sequence, 193 residues long: Molybdenum cofactor guanylyltransferase (193 aa).

Residues 8-10 (LAG), Lys-21, Asp-67, and Asp-98 contribute to the GTP site. Residue Asp-98 participates in Mg(2+) binding.

This sequence belongs to the MobA family. As to quaternary structure, monomer. Mg(2+) is required as a cofactor.

The protein localises to the cytoplasm. It catalyses the reaction Mo-molybdopterin + GTP + H(+) = Mo-molybdopterin guanine dinucleotide + diphosphate. Functionally, transfers a GMP moiety from GTP to Mo-molybdopterin (Mo-MPT) cofactor (Moco or molybdenum cofactor) to form Mo-molybdopterin guanine dinucleotide (Mo-MGD) cofactor. This Cereibacter sphaeroides (Rhodobacter sphaeroides) protein is Molybdenum cofactor guanylyltransferase.